Here is a 317-residue protein sequence, read N- to C-terminus: Phospho-N-acetylmuramoyl-pentapeptide-transferase (317 aa).

Helical transmembrane passes span 3 to 23 (VIIY…PLFI), 48 to 68 (GTPT…MIIM), 72 to 92 (LNSN…IGLI), 112 to 132 (FLLQ…RFGS), 141 to 161 (ITWT…FVAV), 171 to 191 (LDGL…VVSF), 193 to 213 (WHQY…LGFL), 238 to 258 (AIAL…IYVI), and 297 to 317 (VVSV…LSLI).

This sequence belongs to the glycosyltransferase 4 family. MraY subfamily. Mg(2+) serves as cofactor.

The protein localises to the cell membrane. The catalysed reaction is UDP-N-acetyl-alpha-D-muramoyl-L-alanyl-gamma-D-glutamyl-meso-2,6-diaminopimeloyl-D-alanyl-D-alanine + di-trans,octa-cis-undecaprenyl phosphate = di-trans,octa-cis-undecaprenyl diphospho-N-acetyl-alpha-D-muramoyl-L-alanyl-D-glutamyl-meso-2,6-diaminopimeloyl-D-alanyl-D-alanine + UMP. It participates in cell wall biogenesis; peptidoglycan biosynthesis. Catalyzes the initial step of the lipid cycle reactions in the biosynthesis of the cell wall peptidoglycan: transfers peptidoglycan precursor phospho-MurNAc-pentapeptide from UDP-MurNAc-pentapeptide onto the lipid carrier undecaprenyl phosphate, yielding undecaprenyl-pyrophosphoryl-MurNAc-pentapeptide, known as lipid I. The protein is Phospho-N-acetylmuramoyl-pentapeptide-transferase of Clostridium acetobutylicum (strain ATCC 824 / DSM 792 / JCM 1419 / IAM 19013 / LMG 5710 / NBRC 13948 / NRRL B-527 / VKM B-1787 / 2291 / W).